The chain runs to 337 residues: 4-hydroxy-3-methylbut-2-enyl diphosphate reductase (337 aa).

Residue Cys-38 coordinates [4Fe-4S] cluster. (2E)-4-hydroxy-3-methylbut-2-enyl diphosphate-binding residues include His-67 and His-100. Dimethylallyl diphosphate is bound by residues His-67 and His-100. Residues His-67 and His-100 each coordinate isopentenyl diphosphate. Cys-122 provides a ligand contact to [4Fe-4S] cluster. His-150 is a (2E)-4-hydroxy-3-methylbut-2-enyl diphosphate binding site. His-150 contacts dimethylallyl diphosphate. Residue His-150 coordinates isopentenyl diphosphate. Glu-152 functions as the Proton donor in the catalytic mechanism. Thr-190 provides a ligand contact to (2E)-4-hydroxy-3-methylbut-2-enyl diphosphate. Cys-220 serves as a coordination point for [4Fe-4S] cluster. (2E)-4-hydroxy-3-methylbut-2-enyl diphosphate-binding residues include Ser-248, Ser-249, Asn-250, and Ser-293. Dimethylallyl diphosphate is bound by residues Ser-248, Ser-249, Asn-250, and Ser-293. Ser-248, Ser-249, Asn-250, and Ser-293 together coordinate isopentenyl diphosphate.

Belongs to the IspH family. [4Fe-4S] cluster serves as cofactor.

The enzyme catalyses isopentenyl diphosphate + 2 oxidized [2Fe-2S]-[ferredoxin] + H2O = (2E)-4-hydroxy-3-methylbut-2-enyl diphosphate + 2 reduced [2Fe-2S]-[ferredoxin] + 2 H(+). The catalysed reaction is dimethylallyl diphosphate + 2 oxidized [2Fe-2S]-[ferredoxin] + H2O = (2E)-4-hydroxy-3-methylbut-2-enyl diphosphate + 2 reduced [2Fe-2S]-[ferredoxin] + 2 H(+). It participates in isoprenoid biosynthesis; dimethylallyl diphosphate biosynthesis; dimethylallyl diphosphate from (2E)-4-hydroxy-3-methylbutenyl diphosphate: step 1/1. It functions in the pathway isoprenoid biosynthesis; isopentenyl diphosphate biosynthesis via DXP pathway; isopentenyl diphosphate from 1-deoxy-D-xylulose 5-phosphate: step 6/6. Catalyzes the conversion of 1-hydroxy-2-methyl-2-(E)-butenyl 4-diphosphate (HMBPP) into a mixture of isopentenyl diphosphate (IPP) and dimethylallyl diphosphate (DMAPP). Acts in the terminal step of the DOXP/MEP pathway for isoprenoid precursor biosynthesis. The chain is 4-hydroxy-3-methylbut-2-enyl diphosphate reductase from Mycolicibacterium vanbaalenii (strain DSM 7251 / JCM 13017 / BCRC 16820 / KCTC 9966 / NRRL B-24157 / PYR-1) (Mycobacterium vanbaalenii).